Reading from the N-terminus, the 251-residue chain is Large ribosomal subunit protein uL2 (251 aa).

Over residues 1–12 (MGKRLRVQRHGR) the composition is skewed to basic residues. Residues 1-22 (MGKRLRVQRHGRGTPQWRNRGH) form a disordered region.

Belongs to the universal ribosomal protein uL2 family. In terms of assembly, part of the 50S ribosomal subunit. Forms a bridge to the 30S subunit in the 70S ribosome.

In terms of biological role, one of the primary rRNA binding proteins. Required for association of the 30S and 50S subunits to form the 70S ribosome, for tRNA binding and peptide bond formation. It has been suggested to have peptidyltransferase activity; this is somewhat controversial. Makes several contacts with the 16S rRNA in the 70S ribosome. The protein is Large ribosomal subunit protein uL2 of Ignicoccus hospitalis (strain KIN4/I / DSM 18386 / JCM 14125).